Here is a 152-residue protein sequence, read N- to C-terminus: Large ribosomal subunit protein bL9 (152 aa).

Belongs to the bacterial ribosomal protein bL9 family.

Functionally, binds to the 23S rRNA. This chain is Large ribosomal subunit protein bL9, found in Pelagibacter ubique (strain HTCC1062).